A 94-amino-acid chain; its full sequence is Pyrimidine/purine nucleoside phosphorylase (94 aa).

The protein belongs to the nucleoside phosphorylase PpnP family.

The enzyme catalyses a purine D-ribonucleoside + phosphate = a purine nucleobase + alpha-D-ribose 1-phosphate. It carries out the reaction adenosine + phosphate = alpha-D-ribose 1-phosphate + adenine. It catalyses the reaction cytidine + phosphate = cytosine + alpha-D-ribose 1-phosphate. The catalysed reaction is guanosine + phosphate = alpha-D-ribose 1-phosphate + guanine. The enzyme catalyses inosine + phosphate = alpha-D-ribose 1-phosphate + hypoxanthine. It carries out the reaction thymidine + phosphate = 2-deoxy-alpha-D-ribose 1-phosphate + thymine. It catalyses the reaction uridine + phosphate = alpha-D-ribose 1-phosphate + uracil. The catalysed reaction is xanthosine + phosphate = alpha-D-ribose 1-phosphate + xanthine. Functionally, catalyzes the phosphorolysis of diverse nucleosides, yielding D-ribose 1-phosphate and the respective free bases. Can use uridine, adenosine, guanosine, cytidine, thymidine, inosine and xanthosine as substrates. Also catalyzes the reverse reactions. In Pseudomonas entomophila (strain L48), this protein is Pyrimidine/purine nucleoside phosphorylase.